The primary structure comprises 470 residues: Membrane-bound lytic murein transglycosylase F (470 aa).

A signal peptide spans 1 to 21; sequence MLKEKLIIIITLVMLLCACDI. The non-LT domain stretch occupies residues 22-259; the sequence is QEQSTQLAQI…VLEEKYFGHV (238 aa). The tract at residues 260-470 is LT domain; it reads RQFNYVNTLA…PKIGDEVEAK (211 aa). E304 is an active-site residue.

It in the N-terminal section; belongs to the bacterial solute-binding protein 3 family. The protein in the C-terminal section; belongs to the transglycosylase Slt family.

The protein localises to the cell outer membrane. It carries out the reaction Exolytic cleavage of the (1-&gt;4)-beta-glycosidic linkage between N-acetylmuramic acid (MurNAc) and N-acetylglucosamine (GlcNAc) residues in peptidoglycan, from either the reducing or the non-reducing ends of the peptidoglycan chains, with concomitant formation of a 1,6-anhydrobond in the MurNAc residue.. Functionally, murein-degrading enzyme that degrades murein glycan strands and insoluble, high-molecular weight murein sacculi, with the concomitant formation of a 1,6-anhydromuramoyl product. Lytic transglycosylases (LTs) play an integral role in the metabolism of the peptidoglycan (PG) sacculus. Their lytic action creates space within the PG sacculus to allow for its expansion as well as for the insertion of various structures such as secretion systems and flagella. The protein is Membrane-bound lytic murein transglycosylase F of Pseudoalteromonas translucida (strain TAC 125).